The sequence spans 908 residues: 26S proteasome non-ATPase regulatory subunit 2 (908 aa).

At methionine 1 the chain carries N-acetylmethionine. Residues 1-52 are disordered; sequence MEEGGRDKAPVQPQQSPAAALGGTDEKPSGKERRDAGDKDKEQELSEEDKQL. The span at 10-20 shows a compositional bias: low complexity; the sequence is PVQPQQSPAAA. Serine 16 is subject to Phosphoserine. Threonine 24 is modified (phosphothreonine). Positions 24–52 are enriched in basic and acidic residues; that stretch reads TDEKPSGKERRDAGDKDKEQELSEEDKQL. Residues serine 29 and serine 147 each carry the phosphoserine modification. Tyrosine 194 is subject to Phosphotyrosine. Serine 361 and serine 363 each carry phosphoserine. PC repeat units follow at residues 409-442, 443-479, 480-514, 517-551, and 560-589; these read SAAASLGMILLWDVDGGLTQIDKYLYSSEDYIKS, GALLACGIVNSGVRNECDPALALLSDYVLHNSNTMRL, GSIFGLGLAYAGSNREDVLTLLLPVMGDSKSSMEV, VTALACGMIAVGSCNGDVTSTILQTIMEKSETELK, and LGLGLNHLGKGEAIEAILAALEVVSEPFRS. Lysine 551 is modified (N6-acetyllysine). Basic and acidic residues predominate over residues 623–643; the sequence is KEKEEDKDKKEKKDKDKKEAP. The tract at residues 623–645 is disordered; the sequence is KEKEEDKDKKEKKDKDKKEAPAD. PC repeat units follow at residues 692–723 and 742–757; these read LALALISVSNPRLNILDTLSKFSHDADPEVSY and AAMLRQLAQYHAKDPN. The interval 708 to 903 is required for interaction with UBLCP1; the sequence is DTLSKFSHDA…LEGFVILRKN (196 aa).

Belongs to the proteasome subunit S2 family. Component of the 19S proteasome regulatory particle complex. The 26S proteasome consists of a 20S core particle (CP) and two 19S regulatory subunits (RP). The regulatory particle is made of a lid composed of 9 subunits, a base containing 6 ATPases and few additional components including PSMD2. Interacts with RPGRIP1L. Interacts with CRY1 in a KDM8-dependent manner. Interacts (via C-terminus) with phosphatase UBLCP1 (via ubiquitin-like domain); the interaction recruits UBLCP1 to the 19S regulatory particle where it dephosphorylates 19S subunit PSMC2/RPT1 which impairs PSMC2 ATPase activity and disrupts 26S proteasome assembly.

Its function is as follows. Component of the 26S proteasome, a multiprotein complex involved in the ATP-dependent degradation of ubiquitinated proteins. This complex plays a key role in the maintenance of protein homeostasis by removing misfolded or damaged proteins, which could impair cellular functions, and by removing proteins whose functions are no longer required. Therefore, the proteasome participates in numerous cellular processes, including cell cycle progression, apoptosis, or DNA damage repair. Functionally, binds to the intracellular domain of tumor necrosis factor type 1 receptor. The binding domain of TRAP1 and TRAP2 resides outside the death domain of TNFR1. This chain is 26S proteasome non-ATPase regulatory subunit 2 (PSMD2), found in Pongo abelii (Sumatran orangutan).